A 325-amino-acid polypeptide reads, in one-letter code: Methionyl-tRNA formyltransferase (325 aa).

Position 111–114 (111–114) interacts with (6S)-5,6,7,8-tetrahydrofolate; that stretch reads SILP.

It belongs to the Fmt family.

It catalyses the reaction L-methionyl-tRNA(fMet) + (6R)-10-formyltetrahydrofolate = N-formyl-L-methionyl-tRNA(fMet) + (6S)-5,6,7,8-tetrahydrofolate + H(+). Functionally, attaches a formyl group to the free amino group of methionyl-tRNA(fMet). The formyl group appears to play a dual role in the initiator identity of N-formylmethionyl-tRNA by promoting its recognition by IF2 and preventing the misappropriation of this tRNA by the elongation apparatus. This chain is Methionyl-tRNA formyltransferase, found in Microcystis aeruginosa (strain NIES-843 / IAM M-2473).